The chain runs to 839 residues: Phosphatidylinositol-glycan-specific phospholipase D (839 aa).

Residues 1 to 23 (MSAFRFWSGLLMLLGFLCPRSSP) form the signal peptide. N-linked (GlcNAc...) asparagine glycosylation is found at Asn94, Asn271, Asn292, Asn307, and Asn321. FG-GAP repeat units lie at residues 365-427 (SSPA…GLPR), 434-496 (KEAH…GQLS), 498-558 (SPNV…YSSR), 562-622 (NVEA…SPGR), 632-692 (QSWF…GSTR), 703-769 (SLLS…TVGD), and 787-839 (QYVL…LGQD). N-linked (GlcNAc...) asparagine glycans are attached at residues Asn500, Asn590, and Asn658.

This sequence belongs to the GPLD1 family. In terms of assembly, monomer. In terms of processing, glycosylated.

It localises to the secreted. It carries out the reaction a 6-(alpha-D-glucosaminyl)-1-(1,2-diacyl-sn-glycero-3-phospho)-1D-myo-inositol + H2O = 6-(alpha-D-glucosaminyl)-1D-myo-inositol + a 1,2-diacyl-sn-glycero-3-phosphate + H(+). Functionally, this protein hydrolyzes the inositol phosphate linkage in proteins anchored by phosphatidylinositol glycans (GPI-anchor) thus releasing these proteins from the membrane. The protein is Phosphatidylinositol-glycan-specific phospholipase D (GPLD1) of Bos taurus (Bovine).